The chain runs to 436 residues: GTPase Der (436 aa).

2 EngA-type G domains span residues 3-168 and 177-352; these read PLVA…EEKS and IRLA…EQRS. GTP-binding positions include 9 to 16, 56 to 60, 120 to 123, 183 to 190, 230 to 234, and 295 to 298; these read GRPNVGKS, DTGGY, NKVE, DTAGL, and NKWD. The KH-like domain occupies 353–436; the sequence is QQITTSDLNR…VPFSLRFMQK (84 aa).

The protein belongs to the TRAFAC class TrmE-Era-EngA-EngB-Septin-like GTPase superfamily. EngA (Der) GTPase family. As to quaternary structure, associates with the 50S ribosomal subunit.

Functionally, GTPase that plays an essential role in the late steps of ribosome biogenesis. The protein is GTPase Der of Prosthecochloris aestuarii (strain DSM 271 / SK 413).